A 318-amino-acid chain; its full sequence is Death effector domain-containing protein (318 aa).

The DED domain maps to 25–103 (SLHRMFDIVG…RHDLLPYVTL (79 aa)). The segment at 128–191 (PRALSDPEPR…SVTPDPKEKQ (64 aa)) is disordered.

Interacts with CASP8, CASP10, KRT8, KRT18, CASP3 and FADD. Homodimerizes and heterodimerizes with DEDD2. In terms of processing, exists predominantly in a mono- or diubiquitinated form. In terms of tissue distribution, widely expressed with highest levels in testis. Within the testis, highly expressed in germ cells but not expressed in Sertoli cells.

Its subcellular location is the cytoplasm. It is found in the nucleus. It localises to the nucleolus. A scaffold protein that directs CASP3 to certain substrates and facilitates their ordered degradation during apoptosis. May also play a role in mediating CASP3 cleavage of KRT18. Regulates degradation of intermediate filaments during apoptosis. May play a role in the general transcription machinery in the nucleus and might be an important regulator of the activity of GTF3C3. Inhibits DNA transcription in vitro. In Rattus norvegicus (Rat), this protein is Death effector domain-containing protein (Dedd).